The primary structure comprises 1902 residues: Plexin-B3 (1902 aa).

Positions 1-34 (MLTDFLQAPVMAPWSPFSLHLLLLFLLLLPLTRA) are cleaved as a signal peptide. The Sema domain occupies 35–461 (HRFSVPNASF…TAQQVDRILV (427 aa)). Topologically, residues 35-1245 (HRFSVPNASF…MISTFPVEAQ (1211 aa)) are extracellular. N-linked (GlcNAc...) asparagine glycosylation is present at Asn-41. 2 disulfide bridges follow: Cys-88-Cys-97 and Cys-122-Cys-130. An N-linked (GlcNAc...) asparagine glycan is attached at Asn-221. Cystine bridges form between Cys-257/Cys-360, Cys-273/Cys-305, and Cys-323/Cys-347. Residues 353-372 (DSPESYPCGDEHTPSPIAGR) form a disordered region. 2 N-linked (GlcNAc...) asparagine glycosylation sites follow: Asn-416 and Asn-469. In terms of domain architecture, PSI 1 spans 463–515 (ACPQFPNCTTCLQARDPLCGWCILQGRCTRRAECGRAVQPNQWLWSYEDNHCL). Intrachain disulfides connect Cys-464-Cys-481, Cys-470-Cys-514, Cys-473-Cys-490, Cys-484-Cys-496, and Cys-551-Cys-569. 2 consecutive PSI domains span residues 609–671 (DCSA…EACP) and 776–822 (DCAM…QLCP). N-linked (GlcNAc...) asparagine glycans are attached at residues Asn-791, Asn-889, Asn-946, Asn-1090, and Asn-1207. IPT/TIG domains lie at 824-913 (PSID…HFTY), 915-1001 (DPVL…FRYT), and 1003-1134 (NPQL…FLYQ). Residues 1246-1266 (VGLGMGAAMLIAAVLLLTLMY) form a helical membrane-spanning segment. Topologically, residues 1267–1902 (RHKSKQALRD…ALVEYKVTDL (636 aa)) are cytoplasmic.

Belongs to the plexin family. Binds MET and MST1R. Interacts with RIT2/RIN. Interacts (via cytoplasmic domain) with FSCN1 and RAC1. May form homodimers (via Sema domain). Interacts (via cytoplasmic domain) with ARHGDIA. Expressed in glioma cells (at protein level). Expressed in glioma cells and oligodendrocyte precursor cells.

It is found in the cell membrane. In terms of biological role, receptor for SEMA5A that plays a role in axon guidance, invasive growth and cell migration. Stimulates neurite outgrowth and mediates Ca(2+)/Mg(2+)-dependent cell aggregation. In glioma cells, SEMA5A stimulation of PLXNB3 results in the disassembly of F-actin stress fibers, disruption of focal adhesions and cellular collapse as well as inhibition of cell migration and invasion through ARHGDIA-mediated inactivation of RAC1. The sequence is that of Plexin-B3 (Plxnb3) from Rattus norvegicus (Rat).